The chain runs to 723 residues: Malonamoyl-CoA synthetase vrtB (723 aa).

This sequence belongs to the ATP-dependent AMP-binding enzyme family.

Its pathway is secondary metabolite biosynthesis; terpenoid biosynthesis. Malonamoyl-CoA synthetase; part of the gene cluster that mediates the biosynthesis of viridicatumtoxin, a tetracycline-like fungal meroterpenoid with a unique, fused spirobicyclic ring system. The first step of the pathway is the production of the malonamoyl-CoA starter unit for the polyketide synthase vrtA. The aldolase vrtJ may be involved in the synthesis of the malonamate substrate for malonamoyl-CoA synthetase vrtB. The polyketide synthase vrtA then may utilize the malonamoyl-CoA starter unit, followed by sequential condensation of eight malonyl-CoA units to form the polyketide backbone. The cyclization of the last ring could be mediated by the lactamase-like protein vrtG. The proposed post-PKS tailoring steps are a hydroxylation at C5 catalyzed the cytochrome P450 monooxygenase vrtE, a hydroxylation at C12a catalyzed by VrtH and/or VrtI, and an O-methylation by the O-methyltransferase vrtF. VrtC is then proposed to catalyze the transfer of a geranyl group synthesized by vrtD to the aromatic C ring of the tetracyclic polyketide intermediate of viridicatumtoxin to yield previridicatumtoxin. Finally, the cytochrome P450 monooxygenase vrtK catalyzes the spirocyclization of the geranyl moiety of previridicatumtoxin to afford viridicatumtoxin. The chain is Malonamoyl-CoA synthetase vrtB from Penicillium aethiopicum.